The sequence spans 314 residues: Putative S-adenosyl-L-methionine-dependent methyltransferase MAB_3886c (314 aa).

S-adenosyl-L-methionine-binding positions include D133 and 162–163 (DL).

The protein belongs to the UPF0677 family.

Its function is as follows. Exhibits S-adenosyl-L-methionine-dependent methyltransferase activity. This chain is Putative S-adenosyl-L-methionine-dependent methyltransferase MAB_3886c, found in Mycobacteroides abscessus (strain ATCC 19977 / DSM 44196 / CCUG 20993 / CIP 104536 / JCM 13569 / NCTC 13031 / TMC 1543 / L948) (Mycobacterium abscessus).